The following is a 461-amino-acid chain: D-phenylhydantoinase (461 aa).

His59, His61, and Lys151 together coordinate a divalent metal cation. Residue Lys151 is modified to N6-carboxylysine. Tyr156 contributes to the substrate binding site. A divalent metal cation is bound by residues His182 and His239. Ser286 is a substrate binding site. Asp313 is a binding site for a divalent metal cation. Asn335 provides a ligand contact to substrate.

It belongs to the metallo-dependent hydrolases superfamily. Hydantoinase/dihydropyrimidinase family. Homotetramer. The cofactor is a divalent metal cation. In terms of processing, carboxylation allows a single lysine to coordinate two divalent metal cations.

It carries out the reaction D-5-phenylhydantoin + H2O = N-carbamoyl-D-phenylglycine + H(+). Its function is as follows. Catalyzes the stereospecific hydrolysis of the cyclic amide bond of D-hydantoin derivatives with an aromatic side chains at the 5'-position. Has no activity on dihydropyrimidines. The physiological function is unknown. The protein is D-phenylhydantoinase of Escherichia coli O7:K1 (strain IAI39 / ExPEC).